Reading from the N-terminus, the 202-residue chain is MGQSSLDHGVQGPVAGTGDFGPLKEATATGFISCAQAPRRARKRVEGTASSNVFSMFDQSQIQEFKEAFTIMDQNRDGFIDKEDLRDTFAALGRINVKNEELEAMVKEAPGPINFTVFLTMFGEKLKGTDPEETILHAFKVFDTEGKGFVKADFIKEKLMTQADRFSEEEVKQMFAAFPPDVCGNLDYRNLCYVITHGEEKD.

The tract at residues 1 to 21 is disordered; sequence MGQSSLDHGVQGPVAGTGDFG. EF-hand domains follow at residues 60-95, 130-165, and 166-201; these read SQIQEFKEAFTIMDQNRDGFIDKEDLRDTFAALGRI, DPEETILHAFKVFDTEGKGFVKADFIKEKLMTQADR, and FSEEEVKQMFAAFPPDVCGNLDYRNLCYVITHGEEK. Ca(2+) contacts are provided by D73, N75, D77, and D84.

In terms of assembly, myosin is a hexamer of 2 heavy chains and 4 light chains. Specifically expressed in precursor B- and T-lymphocytes.

The polypeptide is Myosin regulatory light chain 10 (Myl10) (Mus musculus (Mouse)).